Here is a 529-residue protein sequence, read N- to C-terminus: MEPGLVGPGPYRATRLWNEIIELFRAGMPLRKHRCRFKSYERCFKASEAVDCLHELLGSNQNFGPEVTRSQTVKLLKKFLKNHVIEDIKGRWGKEDFQDDGHLYRFPPSSPLKPYPKKPSFGKEVIKFPDWDDPKAGTSQEHIPVKSIMMNSETWYKRHSIAIGEVPACKLVFRRELTQENIEEIWKSMTLARLQKVLGLDCLDEVIDTKLVNSKHIVQNAYNVNKQGIVTLEDKSKDLPHWILSAMKCLANWPICSDLKQPTYSGFERDVFKTIVDYFGQMKEPLLTFNFFDVFVSVLGLLQKHNEAIEALQISCLLLPPESRRKLQLLVRMMARISFNKDLPPLSESVRTRVLMVQAFSRCILCSKDEMDLDELLAAKLVSFLMDNYQEILSVPSSLKSSIEEHVVHVQRVQIKYAGADTDAAFPAPSFCHQISTDEFEYQRATGSQEPLAALLEEIATNKEISVKDKKKKLKQFQKSYPEVYRVRFPTPETEAVLFPEKSKQKPPLLMWALRKPFQPFHRTRSFRM.

In terms of domain architecture, DEP spans 24 to 108; the sequence is FRAGMPLRKH…DDGHLYRFPP (85 aa). The Rho-GAP domain occupies 192-393; the sequence is ARLQKVLGLD…FLMDNYQEIL (202 aa).

This is DEP domain-containing protein 1B (DEPDC1B) from Gallus gallus (Chicken).